The following is a 273-amino-acid chain: Glutamate 5-kinase (273 aa).

ATP is bound at residue lysine 15. 3 residues coordinate substrate: serine 55, aspartate 142, and asparagine 158. Residues 178 to 179 (SD) and 220 to 226 (TGGMLSK) contribute to the ATP site.

This sequence belongs to the glutamate 5-kinase family.

It is found in the cytoplasm. It carries out the reaction L-glutamate + ATP = L-glutamyl 5-phosphate + ADP. The protein operates within amino-acid biosynthesis; L-proline biosynthesis; L-glutamate 5-semialdehyde from L-glutamate: step 1/2. Catalyzes the transfer of a phosphate group to glutamate to form L-glutamate 5-phosphate. This chain is Glutamate 5-kinase, found in Streptococcus pyogenes serotype M2 (strain MGAS10270).